We begin with the raw amino-acid sequence, 671 residues long: Palmitoleoyl-protein carboxylesterase NOTUM (671 aa).

An N-terminal signal peptide occupies residues 1–46 (MAVEQIDKMAAKAGEATNKWIKPQQPLLTLLLLLATFSQLPAVCSS). N-linked (GlcNAc...) asparagine glycosylation is present at Asn95. Catalysis depends on charge relay system residues Ser237 and Asp338. Residue Asn372 is glycosylated (N-linked (GlcNAc...) asparagine). His384 serves as the catalytic Charge relay system. The segment at 411–592 (HSTRSRRHDK…TKSKKRHRVP (182 aa)) is disordered. A compositionally biased stretch (basic residues) spans 439 to 454 (NQRHQRHRQRLQRQKH). Residues 470–486 (LSKEEREERKRLRQEQR) show a composition bias toward basic and acidic residues. Residues 487–497 (QRRKQRRRQQQ) show a composition bias toward basic residues. A compositionally biased stretch (basic and acidic residues) spans 505-514 (QEHRNKKDNS). Residues 570 to 583 (PQKTRSSNNASAGT) show a composition bias toward polar residues. Asn578 and Asn612 each carry an N-linked (GlcNAc...) asparagine glycan.

Belongs to the pectinacetylesterase family. Notum subfamily.

It is found in the secreted. The protein resides in the cell surface. It catalyses the reaction [Wnt protein]-O-(9Z)-hexadecenoyl-L-serine + H2O = [Wnt protein]-L-serine + (9Z)-hexadecenoate + H(+). In terms of biological role, carboxylesterase that acts as a key negative regulator of the Wnt signaling pathway by specifically mediating depalmitoleoylation of WNT proteins. Serine palmitoleoylation of WNT proteins is required for efficient binding to frizzled receptors. Also acts as a regulator of long-range activity of Hedgehog (hh), possibly by regulating the switch between low and high level hh pathway signaling. In Drosophila melanogaster (Fruit fly), this protein is Palmitoleoyl-protein carboxylesterase NOTUM.